The sequence spans 509 residues: Ribonuclease Y (509 aa).

A helical membrane pass occupies residues 1 to 21 (MIILVAVVTAVISFGLGYVVA). The KH domain occupies 199 to 259 (TVSTVSLPSD…IRREIARLTL (61 aa)). The HD domain maps to 325-418 (VLDHSIEVAQ…VAAADALSAA (94 aa)).

The protein belongs to the RNase Y family.

The protein localises to the cell membrane. Endoribonuclease that initiates mRNA decay. This Pseudothermotoga lettingae (strain ATCC BAA-301 / DSM 14385 / NBRC 107922 / TMO) (Thermotoga lettingae) protein is Ribonuclease Y.